Reading from the N-terminus, the 132-residue chain is Large-conductance mechanosensitive channel (132 aa).

3 helical membrane passes run 14-34 (VLDMAVGVILGAALKSIVDSL), 39-59 (INPIISLFVGQVDLSGIAVTI), and 68-88 (IGNFLNDVINFLIIAIIVFLI).

The protein belongs to the MscL family. In terms of assembly, homopentamer.

The protein localises to the cell membrane. In terms of biological role, channel that opens in response to stretch forces in the membrane lipid bilayer. May participate in the regulation of osmotic pressure changes within the cell. The sequence is that of Large-conductance mechanosensitive channel from Latilactobacillus sakei subsp. sakei (strain 23K) (Lactobacillus sakei subsp. sakei).